A 1265-amino-acid chain; its full sequence is Stromal processing peptidase, chloroplastic (1265 aa).

A chloroplast-targeting transit peptide spans M1–N143. H240 lines the Zn(2+) pocket. The Proton acceptor role is filled by E243. H244 provides a ligand contact to Zn(2+). Residue E314 is part of the active site. E321 is a Zn(2+) binding site.

The protein belongs to the peptidase M16 family. Requires Zn(2+) as cofactor.

The protein resides in the plastid. Its subcellular location is the chloroplast stroma. In terms of biological role, cleaves presequences (transit peptides) from chloroplastic protein precursors. Initially recognizes a precursor by binding to the C-terminus of its transit peptide and then removes the transit peptide in a single endoproteolytic step. In a next step, pursues the cleavage of transit peptide to a subfragment form. In Arabidopsis thaliana (Mouse-ear cress), this protein is Stromal processing peptidase, chloroplastic.